Consider the following 231-residue polypeptide: Probable transglycosylase SceD (231 aa).

Residues 1–27 (MKKTLLASSLAVGLGIVAGNAGHEAQA) form the signal peptide. The segment at 92–153 (MSAQAPATNN…ESKASEGSSV (62 aa)) is disordered. Residues 96–116 (APATNNVAPSADQSNQVQSQE) are compositionally biased toward polar residues. The span at 119–137 (APQNAQTQQPQASTSNNSQ) shows a compositional bias: low complexity. Positions 138-153 (VTATPTESKASEGSSV) are enriched in polar residues.

The protein belongs to the transglycosylase family. SceD subfamily.

The protein resides in the secreted. Is able to cleave peptidoglycan and affects clumping and separation of bacterial cells. In Staphylococcus aureus (strain MRSA252), this protein is Probable transglycosylase SceD (sceD).